A 341-amino-acid chain; its full sequence is Ribosomal RNA small subunit methyltransferase H (341 aa).

S-adenosyl-L-methionine-binding positions include 47–49 (GGY), Asp64, Phe91, Asp109, and Gln116.

It belongs to the methyltransferase superfamily. RsmH family.

The protein resides in the cytoplasm. The enzyme catalyses cytidine(1402) in 16S rRNA + S-adenosyl-L-methionine = N(4)-methylcytidine(1402) in 16S rRNA + S-adenosyl-L-homocysteine + H(+). In terms of biological role, specifically methylates the N4 position of cytidine in position 1402 (C1402) of 16S rRNA. This Rhizobium etli (strain ATCC 51251 / DSM 11541 / JCM 21823 / NBRC 15573 / CFN 42) protein is Ribosomal RNA small subunit methyltransferase H.